The sequence spans 353 residues: Quinolinate synthase (353 aa).

2 residues coordinate iminosuccinate: His47 and Ser68. Position 113 (Cys113) interacts with [4Fe-4S] cluster. Iminosuccinate is bound by residues 139–141 and Ser156; that span reads YAN. Cys200 contributes to the [4Fe-4S] cluster binding site. Iminosuccinate is bound by residues 226–228 and Thr243; that span reads HPE. Cys297 lines the [4Fe-4S] cluster pocket.

Belongs to the quinolinate synthase family. Type 1 subfamily. [4Fe-4S] cluster is required as a cofactor.

Its subcellular location is the cytoplasm. The enzyme catalyses iminosuccinate + dihydroxyacetone phosphate = quinolinate + phosphate + 2 H2O + H(+). It participates in cofactor biosynthesis; NAD(+) biosynthesis; quinolinate from iminoaspartate: step 1/1. In terms of biological role, catalyzes the condensation of iminoaspartate with dihydroxyacetone phosphate to form quinolinate. This chain is Quinolinate synthase, found in Vibrio vulnificus (strain YJ016).